We begin with the raw amino-acid sequence, 527 residues long: Mitochondrial substrate carrier family protein V (527 aa).

Basic and acidic residues predominate over residues 1-14; the sequence is MNSSDFKKSFKEST. The tract at residues 1–29 is disordered; sequence MNSSDFKKSFKESTENNSNTYRPSKTLNT. The Mitochondrial intermembrane segment spans residues 1-132; it reads MNSSDFKKSF…VSKKSISKEN (132 aa). Over residues 15 to 29 the composition is skewed to polar residues; the sequence is ENNSNTYRPSKTLNT. Solcar repeat units follow at residues 130-220, 253-345, and 430-519; these read KENV…CKKH, MTVP…FKII, and VNMI…CKDL. Residues 133-153 traverse the membrane as a helical segment; the sequence is VNYLVSGSIAGAISRSATAGF. The Mitochondrial matrix portion of the chain corresponds to 154–187; it reads ERLTIIQQVQGMSQNLSQGYVGCIAAMKEMVKRE. A helical transmembrane segment spans residues 188-208; sequence GFKSIWKGNGANIVKVSPNSG. Over 209 to 258 the chain is Mitochondrial intermembrane; sequence IRFLTYEFCKKHFLDNSSNHPSSSSIENGIDGNGVGCGSGSEMKMTVPQT. The chain crosses the membrane as a helical span at residues 259–279; that stretch reads MFSGAMAGLTSTFFTYPLDVV. The Mitochondrial matrix segment spans residues 280–324; the sequence is RIRLSLQGSCSNDYAAHRYNGITHSFFKIHKDEGVKGLYKGLGTS. Residues 325-345 form a helical membrane-spanning segment; that stretch reads IASIVPWVSISFATYEGFKII. Topologically, residues 346–435 are mitochondrial intermembrane; that stretch reads CKKMILNYQI…LKKGVNMICD (90 aa). The chain crosses the membrane as a helical span at residues 436–456; sequence FVCGALSGAVTMTVCYPLDVL. Residues 457 to 487 lie on the Mitochondrial matrix side of the membrane; it reads RRRMMIQGIGGNKVLYKNGWDATKKILSNEG. The chain crosses the membrane as a helical span at residues 488-508; it reads LVAFYHGIIPAYFKVVPTVAI. Topologically, residues 509–527 are mitochondrial intermembrane; it reads SFAVYEICKDLGSNKYQQK.

This sequence belongs to the mitochondrial carrier (TC 2.A.29) family.

It is found in the mitochondrion inner membrane. In terms of biological role, mitochondrial solute carriers shuttle metabolites, nucleotides, and cofactors through the mitochondrial inner membrane. This is Mitochondrial substrate carrier family protein V (mcfV) from Dictyostelium discoideum (Social amoeba).